The sequence spans 231 residues: ATP-dependent dethiobiotin synthetase BioD 2 (231 aa).

13 to 18 (SVGKTV) is an ATP binding site. Residue Thr17 coordinates Mg(2+). Lys38 is a catalytic residue. Residues Asp55, 112-115 (EGTG), 172-173 (NR), 201-203 (PYL), and Gln208 each bind ATP. The Mg(2+) site is built by Asp55 and Glu112.

Belongs to the dethiobiotin synthetase family. In terms of assembly, homodimer. It depends on Mg(2+) as a cofactor.

It is found in the cytoplasm. It carries out the reaction (7R,8S)-7,8-diammoniononanoate + CO2 + ATP = (4R,5S)-dethiobiotin + ADP + phosphate + 3 H(+). It functions in the pathway cofactor biosynthesis; biotin biosynthesis; biotin from 7,8-diaminononanoate: step 1/2. Its function is as follows. Catalyzes a mechanistically unusual reaction, the ATP-dependent insertion of CO2 between the N7 and N8 nitrogen atoms of 7,8-diaminopelargonic acid (DAPA, also called 7,8-diammoniononanoate) to form a ureido ring. This Escherichia coli O157:H7 protein is ATP-dependent dethiobiotin synthetase BioD 2.